Here is a 529-residue protein sequence, read N- to C-terminus: Bifunctional purine biosynthesis protein PurH (529 aa).

An MGS-like domain is found at 2–149 (TNLVPVGRAL…KNHRFVNVVT (148 aa)).

It belongs to the PurH family.

The catalysed reaction is (6R)-10-formyltetrahydrofolate + 5-amino-1-(5-phospho-beta-D-ribosyl)imidazole-4-carboxamide = 5-formamido-1-(5-phospho-D-ribosyl)imidazole-4-carboxamide + (6S)-5,6,7,8-tetrahydrofolate. It carries out the reaction IMP + H2O = 5-formamido-1-(5-phospho-D-ribosyl)imidazole-4-carboxamide. It participates in purine metabolism; IMP biosynthesis via de novo pathway; 5-formamido-1-(5-phospho-D-ribosyl)imidazole-4-carboxamide from 5-amino-1-(5-phospho-D-ribosyl)imidazole-4-carboxamide (10-formyl THF route): step 1/1. Its pathway is purine metabolism; IMP biosynthesis via de novo pathway; IMP from 5-formamido-1-(5-phospho-D-ribosyl)imidazole-4-carboxamide: step 1/1. The sequence is that of Bifunctional purine biosynthesis protein PurH from Cereibacter sphaeroides (strain ATCC 17029 / ATH 2.4.9) (Rhodobacter sphaeroides).